The chain runs to 460 residues: UDP-N-acetylmuramoylalanine--D-glutamate ligase (460 aa).

Position 120–126 (glycine 120–threonine 126) interacts with ATP.

This sequence belongs to the MurCDEF family.

The protein resides in the cytoplasm. It carries out the reaction UDP-N-acetyl-alpha-D-muramoyl-L-alanine + D-glutamate + ATP = UDP-N-acetyl-alpha-D-muramoyl-L-alanyl-D-glutamate + ADP + phosphate + H(+). It functions in the pathway cell wall biogenesis; peptidoglycan biosynthesis. Cell wall formation. Catalyzes the addition of glutamate to the nucleotide precursor UDP-N-acetylmuramoyl-L-alanine (UMA). The polypeptide is UDP-N-acetylmuramoylalanine--D-glutamate ligase (Lactobacillus gasseri (strain ATCC 33323 / DSM 20243 / BCRC 14619 / CIP 102991 / JCM 1131 / KCTC 3163 / NCIMB 11718 / NCTC 13722 / AM63)).